The primary structure comprises 114 residues: MKAINRLRKNEDFRKVYKKRKSMANKLLIIYILENGYNFNRVGFTVSKKVGKSVIRSRVKRLLNESYRLNNEKVKQGYDIIFVARNTCVDASYKEIESAILHLLKKMNLINSAV.

Belongs to the RnpA family. In terms of assembly, consists of a catalytic RNA component (M1 or rnpB) and a protein subunit.

It carries out the reaction Endonucleolytic cleavage of RNA, removing 5'-extranucleotides from tRNA precursor.. RNaseP catalyzes the removal of the 5'-leader sequence from pre-tRNA to produce the mature 5'-terminus. It can also cleave other RNA substrates such as 4.5S RNA. The protein component plays an auxiliary but essential role in vivo by binding to the 5'-leader sequence and broadening the substrate specificity of the ribozyme. The sequence is that of Ribonuclease P protein component from Alkaliphilus oremlandii (strain OhILAs) (Clostridium oremlandii (strain OhILAs)).